We begin with the raw amino-acid sequence, 610 residues long: Major facilitator superfamily multidrug transporter FLU1 (610 aa).

2 N-linked (GlcNAc...) asparagine glycosylation sites follow: N3 and N21. A compositionally biased stretch (polar residues) spans 47–58 (GPTDSVESSSNT). A disordered region spans residues 47–74 (GPTDSVESSSNTADEENEINSFNAQNVK). A run of 11 helical transmembrane segments spans residues 165–185 (ILYC…SAMF), 209–229 (LFVF…ELFG), 231–251 (KLVM…VATA), 262–282 (FFAG…MADM), 292–312 (IAIF…LGAF), 323–343 (WTSY…TFLL), 408–428 (AFIY…FLGE), 437–457 (ELPY…IMLF), 478–498 (LEPM…LGWT), 507–527 (WIVP…IFLP), and 530–550 (NYII…NTFI). The N-linked (GlcNAc...) asparagine glycan is linked to N568. A helical membrane pass occupies residues 573–593 (WASTLLGCIGILLLPMPFVFY).

Belongs to the major facilitator superfamily. DHA1 family. Polyamines/proton antiporter (TC 2.A.1.2.16) subfamily.

The protein localises to the cell membrane. Major facilitator superfamily transporter that mediates resistance to structurally and functionally unrelated compounds including cycloheximide but also azoles such as fuconazole, ketoconazole and itraconazole. Also mediates efflux of histatin 5, a salivary human antimicrobial peptide, and is responsible for reduction of its toxicity in C.albicans. The sequence is that of Major facilitator superfamily multidrug transporter FLU1 from Candida albicans (strain SC5314 / ATCC MYA-2876) (Yeast).